Here is a 299-residue protein sequence, read N- to C-terminus: Nucleotide-binding protein SAV_6292 (299 aa).

ATP is bound at residue 23-30; it reads GMSGAGRS. GTP is bound at residue 74–77; that stretch reads DVRG.

It belongs to the RapZ-like family.

Its function is as follows. Displays ATPase and GTPase activities. In Streptomyces avermitilis (strain ATCC 31267 / DSM 46492 / JCM 5070 / NBRC 14893 / NCIMB 12804 / NRRL 8165 / MA-4680), this protein is Nucleotide-binding protein SAV_6292.